Here is a 111-residue protein sequence, read N- to C-terminus: Large ribosomal subunit protein uL24 (111 aa).

Belongs to the universal ribosomal protein uL24 family. As to quaternary structure, part of the 50S ribosomal subunit.

Functionally, one of two assembly initiator proteins, it binds directly to the 5'-end of the 23S rRNA, where it nucleates assembly of the 50S subunit. One of the proteins that surrounds the polypeptide exit tunnel on the outside of the subunit. The sequence is that of Large ribosomal subunit protein uL24 from Heliobacterium modesticaldum (strain ATCC 51547 / Ice1).